The chain runs to 146 residues: Hemoglobin subunit beta-1 (146 aa).

In terms of domain architecture, Globin spans 2 to 146 (EWTDAEKSTI…VVAAMGSRYF (145 aa)). Heme b is bound by residues H63 and H92.

This sequence belongs to the globin family. In terms of assembly, heterotetramer of two alpha chains and two beta chains. In terms of tissue distribution, red blood cells.

Involved in oxygen transport from gills to the various peripheral tissues. This is Hemoglobin subunit beta-1 (hbb1) from Oncorhynchus mykiss (Rainbow trout).